Reading from the N-terminus, the 940-residue chain is Isoleucine--tRNA ligase (940 aa).

The short motif at 58–68 (PYANGSIHIGH) is the 'HIGH' region element. Glutamate 563 contributes to the L-isoleucyl-5'-AMP binding site. A 'KMSKS' region motif is present at residues 604–608 (KMSKS). An ATP-binding site is contributed by lysine 607. Residues cysteine 902, cysteine 905, cysteine 922, and cysteine 925 each contribute to the Zn(2+) site.

This sequence belongs to the class-I aminoacyl-tRNA synthetase family. IleS type 1 subfamily. In terms of assembly, monomer. It depends on Zn(2+) as a cofactor.

The protein resides in the cytoplasm. The enzyme catalyses tRNA(Ile) + L-isoleucine + ATP = L-isoleucyl-tRNA(Ile) + AMP + diphosphate. Its function is as follows. Catalyzes the attachment of isoleucine to tRNA(Ile). As IleRS can inadvertently accommodate and process structurally similar amino acids such as valine, to avoid such errors it has two additional distinct tRNA(Ile)-dependent editing activities. One activity is designated as 'pretransfer' editing and involves the hydrolysis of activated Val-AMP. The other activity is designated 'posttransfer' editing and involves deacylation of mischarged Val-tRNA(Ile). In Marinomonas sp. (strain MWYL1), this protein is Isoleucine--tRNA ligase.